Consider the following 346-residue polypeptide: Peripherin-2 (346 aa).

At 1 to 24 (MALLKVKFDQKKRVKLAQGLWLMN) the chain is on the cytoplasmic side. The chain crosses the membrane as a helical span at residues 25–43 (WLSVLAGIVIFSLGLFLKI). Residues 44–61 (ELRKRSDVMNNSESHFVP) are Lumenal-facing. An N-linked (GlcNAc...) asparagine glycan is attached at Asn53. A helical transmembrane segment spans residues 62-80 (NSLIVMGVLSCVFNSLAGK). The Cytoplasmic segment spans residues 81–99 (ICYDALDPAKYAKWKPWLK). A helical transmembrane segment spans residues 100–123 (PYLAVCVLFNIALFLVTLCCFLMR). Residues 124–264 (GSLESTLAHG…LSYYSSLMNS (141 aa)) lie on the Lumenal side of the membrane. N-linked (GlcNAc...) asparagine glycosylation occurs at Asn229. Residues 265–290 (MGAVTLLVWLFEVTITIGLRYLHTAL) form a helical membrane-spanning segment. The Cytoplasmic portion of the chain corresponds to 291-346 (EGVSNPEDPECESEGWLLEKSVSETWKAFLESLKKLGKSNQVEAEGADAGQAPEAG). Residues 341–346 (QAPEAG) form an interaction with MREG region.

The protein belongs to the PRPH2/ROM1 family. In terms of assembly, homodimer; disulfide-linked. Forms a homotetramer. Forms a heterotetramer with ROM1. Homotetramer and heterotetramer core complexes go on to form higher order complexes by formation of intermolecular disulfide bonds. Interacts with MREG. Interacts with STX3. Interacts with SNAP25. In terms of tissue distribution, retina (photoreceptor). In rim region of ROS (rod outer segment) disks.

It localises to the membrane. It is found in the cell projection. Its subcellular location is the cilium. The protein localises to the photoreceptor outer segment. The protein resides in the photoreceptor inner segment. In terms of biological role, essential for retina photoreceptor outer segment disk morphogenesis, may also play a role with ROM1 in the maintenance of outer segment disk structure. Required for the maintenance of retinal outer nuclear layer thickness. Required for the correct development and organization of the photoreceptor inner segment. This Canis lupus familiaris (Dog) protein is Peripherin-2 (PRPH2).